Consider the following 153-residue polypeptide: Deoxyuridine 5'-triphosphate nucleotidohydrolase (153 aa).

Substrate-binding positions include 71–73, Asn-84, 88–90, and Lys-98; these read RSG and TID.

Belongs to the dUTPase family. Requires Mg(2+) as cofactor.

The catalysed reaction is dUTP + H2O = dUMP + diphosphate + H(+). It participates in pyrimidine metabolism; dUMP biosynthesis; dUMP from dCTP (dUTP route): step 2/2. Its function is as follows. This enzyme is involved in nucleotide metabolism: it produces dUMP, the immediate precursor of thymidine nucleotides and it decreases the intracellular concentration of dUTP so that uracil cannot be incorporated into DNA. In Wolbachia sp. subsp. Drosophila simulans (strain wRi), this protein is Deoxyuridine 5'-triphosphate nucleotidohydrolase.